The following is a 475-amino-acid chain: Ribulose bisphosphate carboxylase large chain (475 aa).

A propeptide spanning residues 1-2 is cleaved from the precursor; the sequence is MS. Proline 3 bears the N-acetylproline mark. Residue lysine 14 is modified to N6,N6,N6-trimethyllysine. Residues asparagine 123 and threonine 173 each coordinate substrate. The active-site Proton acceptor is the lysine 175. Lysine 177 contacts substrate. 3 residues coordinate Mg(2+): lysine 201, aspartate 203, and glutamate 204. Lysine 201 is subject to N6-carboxylysine. The active-site Proton acceptor is the histidine 294. Positions 295, 327, and 379 each coordinate substrate.

This sequence belongs to the RuBisCO large chain family. Type I subfamily. As to quaternary structure, heterohexadecamer of 8 large chains and 8 small chains. Requires Mg(2+) as cofactor.

The protein resides in the plastid. The enzyme catalyses 2 (2R)-3-phosphoglycerate + 2 H(+) = D-ribulose 1,5-bisphosphate + CO2 + H2O. It catalyses the reaction D-ribulose 1,5-bisphosphate + O2 = 2-phosphoglycolate + (2R)-3-phosphoglycerate + 2 H(+). Functionally, ruBisCO catalyzes two reactions: the carboxylation of D-ribulose 1,5-bisphosphate, the primary event in carbon dioxide fixation, as well as the oxidative fragmentation of the pentose substrate in the photorespiration process. Both reactions occur simultaneously and in competition at the same active site. The chain is Ribulose bisphosphate carboxylase large chain from Aneura mirabilis (Parasitic liverwort).